The primary structure comprises 412 residues: Branched-chain alpha-ketoacid dehydrogenase kinase (412 aa).

Residues 1 to 30 (MILTSVLGSGPRSGSSLWPLLGSSLSLRVR) constitute a mitochondrion transit peptide. Ser-31 is subject to Phosphoserine. The Histidine kinase domain occupies 159–404 (LDDHKDVVTL…DVYLRLRHID (246 aa)). Residues Lys-192 and Lys-233 each carry the N6-acetyllysine modification. ATP is bound by residues Asn-279 and Asp-315. Position 279 (Asn-279) interacts with Mg(2+). Residues Val-328, Asp-330, and Phe-333 each coordinate K(+). Residues Thr-334 and Thr-335 each coordinate ATP. Phosphoserine is present on residues Ser-356 and Ser-360. His-364, Gly-367, and Leu-370 together coordinate ATP. K(+) is bound at residue Gly-367.

The protein belongs to the PDK/BCKDK protein kinase family. As to quaternary structure, homodimer. Homotetramer. Dimerizes through interaction of two opposing nucleotide-binding domains. Interacts with E2 component of the branched-chain alpha-ketoacid dehydrogenase (BCKDH) complex. Competes with BCKDK for binding to the E2 component; this interaction is modulated by branched-chain alpha-keto acids. At steady state, BCKDH holoenzyme contains BCKDK and BCKDHA is phosphorylated. In response to high levels of branched-chain alpha-keto acids, the inhibitory BCKDK is replaced by activating PPM1K leading to BCKDHA dephosphorylation and BCAA degradation. In terms of processing, autophosphorylated. As to expression, expressed in heart and liver.

The protein localises to the mitochondrion matrix. Its subcellular location is the mitochondrion. It catalyses the reaction L-seryl-[3-methyl-2-oxobutanoate dehydrogenase] + ATP = O-phospho-L-seryl-[3-methyl-2-oxobutanoate dehydrogenase] + ADP + H(+). The enzyme catalyses L-seryl-[protein] + ATP = O-phospho-L-seryl-[protein] + ADP + H(+). Its activity is regulated as follows. The ATP-ase activity is up-regulated by potassium and rubidium ions but not by sodium ions. Up-regulated in the presence of apo- or lipoylated-DBT/E2b subunit of the BCKDH complex. Serine/threonine-protein kinase component of macronutrients metabolism. Forms a functional kinase and phosphatase pair with PPM1K, serving as a metabolic regulatory node that coordinates branched-chain amino acids (BCAAs) with glucose and lipid metabolism via two distinct phosphoprotein targets: mitochondrial BCKDHA subunit of the branched-chain alpha-ketoacid dehydrogenase (BCKDH) complex and cytosolic ACLY, a lipogenic enzyme of Krebs cycle. Phosphorylates and inactivates mitochondrial BCKDH complex a multisubunit complex consisting of three multimeric components each involved in different steps of BCAA catabolism: E1 composed of BCKDHA and BCKDHB, E2 core composed of DBT monomers, and E3 composed of DLD monomers. Associates with the E2 component of BCKDH complex and phosphorylates BCKDHA on Ser-333, leading to conformational changes that interrupt substrate channeling between E1 and E2 and inactivates the BCKDH complex. phosphorylates ACLY on Ser-455 in response to changes in cellular carbohydrate abundance such as occurs during fasting to feeding metabolic transition. Refeeding stimulates MLXIPL/ChREBP transcription factor, leading to increased BCKDK to PPM1K expression ratio, phosphorylation and activation of ACLY that ultimately results in the generation of malonyl-CoA and oxaloacetate immediate substrates of de novo lipogenesis and glucogenesis, respectively. Recognizes phosphosites having SxxE/D canonical motif. The sequence is that of Branched-chain alpha-ketoacid dehydrogenase kinase (Bckdk) from Rattus norvegicus (Rat).